Reading from the N-terminus, the 447-residue chain is Argininosuccinate synthase (447 aa).

Residues 17–25 and A43 contribute to the ATP site; that span reads AFSGGLDTS. Y99 contacts L-citrulline. ATP-binding residues include G129 and T131. Residues T131, N135, and D136 each coordinate L-aspartate. Residue N135 participates in L-citrulline binding. D136 serves as a coordination point for ATP. The L-citrulline site is built by R139 and S192. D194 is an ATP binding site. The L-citrulline site is built by T201, E203, and E280.

The protein belongs to the argininosuccinate synthase family. Type 2 subfamily. Homotetramer.

The protein resides in the cytoplasm. The enzyme catalyses L-citrulline + L-aspartate + ATP = 2-(N(omega)-L-arginino)succinate + AMP + diphosphate + H(+). It functions in the pathway amino-acid biosynthesis; L-arginine biosynthesis; L-arginine from L-ornithine and carbamoyl phosphate: step 2/3. The chain is Argininosuccinate synthase from Escherichia coli O8 (strain IAI1).